Reading from the N-terminus, the 437-residue chain is Adenylosuccinate synthetase (437 aa).

GTP contacts are provided by residues 12-18 and 40-42; these read GDEGKGK and GHT. Asp13 (proton acceptor) is an active-site residue. Residues Asp13 and Gly40 each coordinate Mg(2+). Residues 13 to 16, 38 to 41, Thr128, Arg142, Gln223, Thr238, and Arg302 each bind IMP; these read DEGK and NAGH. Residue His41 is the Proton donor of the active site. 298–304 is a substrate binding site; the sequence is TTTGRRR. GTP contacts are provided by residues Arg304, 330 to 332, and 412 to 414; these read KLD and SLG.

The protein belongs to the adenylosuccinate synthetase family. In terms of assembly, homodimer. Requires Mg(2+) as cofactor.

The protein localises to the cytoplasm. The catalysed reaction is IMP + L-aspartate + GTP = N(6)-(1,2-dicarboxyethyl)-AMP + GDP + phosphate + 2 H(+). The protein operates within purine metabolism; AMP biosynthesis via de novo pathway; AMP from IMP: step 1/2. Its function is as follows. Plays an important role in the de novo pathway of purine nucleotide biosynthesis. Catalyzes the first committed step in the biosynthesis of AMP from IMP. The polypeptide is Adenylosuccinate synthetase (Prochlorococcus marinus (strain MIT 9313)).